Here is a 375-residue protein sequence, read N- to C-terminus: WAT1-related protein At1g70260 (375 aa).

A run of 10 helical transmembrane segments spans residues Leu-10–Ala-30, Phe-41–Leu-61, Ile-72–Phe-92, Ile-106–Leu-126, Met-143–Ile-163, Trp-191–Val-211, Val-225–Glu-245, Leu-259–Val-278, Val-289–Val-309, and Leu-312–Trp-332. Residues Ala-25–Arg-134 form the EamA domain. The interval Glu-337–His-356 is disordered.

The protein belongs to the drug/metabolite transporter (DMT) superfamily. Plant drug/metabolite exporter (P-DME) (TC 2.A.7.4) family.

It is found in the membrane. This chain is WAT1-related protein At1g70260, found in Arabidopsis thaliana (Mouse-ear cress).